Consider the following 206-residue polypeptide: Nucleoside triphosphate pyrophosphatase (206 aa).

Asp76 functions as the Proton acceptor in the catalytic mechanism.

This sequence belongs to the Maf family. Requires a divalent metal cation as cofactor.

The protein localises to the cytoplasm. The catalysed reaction is a ribonucleoside 5'-triphosphate + H2O = a ribonucleoside 5'-phosphate + diphosphate + H(+). It catalyses the reaction a 2'-deoxyribonucleoside 5'-triphosphate + H2O = a 2'-deoxyribonucleoside 5'-phosphate + diphosphate + H(+). Its function is as follows. Nucleoside triphosphate pyrophosphatase. May have a dual role in cell division arrest and in preventing the incorporation of modified nucleotides into cellular nucleic acids. The protein is Nucleoside triphosphate pyrophosphatase of Streptomyces avermitilis (strain ATCC 31267 / DSM 46492 / JCM 5070 / NBRC 14893 / NCIMB 12804 / NRRL 8165 / MA-4680).